The sequence spans 295 residues: Ent-pimara-9(11),15-diene synthase (295 aa).

It belongs to the terpene synthase family. Monomer. It depends on a divalent metal cation as a cofactor.

It catalyses the reaction ent-copalyl diphosphate = ent-pimara-9(11),15-diene + diphosphate. Its pathway is antibiotic biosynthesis. Its function is as follows. Involved in viguiepinol biosynthesis. Catalyzes the conversion of copalyl diphosphate (ent-CDP) into pimara-9(11),15-diene (PMD). This is Ent-pimara-9(11),15-diene synthase from Streptomyces sp. (strain KO-3988).